The following is an 821-amino-acid chain: Protein SCAR1 (821 aa).

Disordered stretches follow at residues 168 to 189, 205 to 289, and 577 to 625; these read KRAS…QRGR, TCTS…RGSS, and TSLP…RESK. Residues 206–225 are compositionally biased toward polar residues; sequence CTSLSFSGRTSTSKTASTIE. The span at 226–250 shows a compositional bias: basic and acidic residues; sequence IESKSDLQEHRSFSFDSRSGGEKPK. Polar residues predominate over residues 252-265; it reads VSSSSRFTPGSRTI. Residues 592 to 612 show a composition bias toward low complexity; the sequence is SSSYISDNSDNDNRSVSMSEQ. Residues 756 to 774 enclose the WH2 domain; sequence EAGDFLHQIRTKQFNLRRV. The tract at residues 802 to 821 is disordered; the sequence is QAVASDDGEGESDTWSDSDT. The segment covering 807-821 has biased composition (acidic residues); it reads DDGEGESDTWSDSDT.

The protein belongs to the SCAR/WAVE family. Binds BRK1 and actin. Interacts with SPK1, ABI1 and ABI2. Expressed in expanding cotyledons, expanding leaves and expanding siliques containing developing embryos. Detected in unopened flower buds and in the expanding tip region of roots. Reduced expression in mature leaves and mature cotyledons.

The protein resides in the cytoplasm. The protein localises to the cytoskeleton. Its function is as follows. Involved in regulation of actin and microtubule organization. Part of a WAVE complex that activates the Arp2/3 complex. Regulates trichome branch positioning and expansion. This chain is Protein SCAR1 (SCAR1), found in Arabidopsis thaliana (Mouse-ear cress).